A 1261-amino-acid polypeptide reads, in one-letter code: ABC-type transmembrane transporter verA (1261 aa).

A helical transmembrane segment spans residues 41–61; it reads IGCAFAAVCSGAAMPLMALIL. The ABC transmembrane type-1 1 domain occupies 41 to 334; it reads IGCAFAAVCS…LGPNMPSFIK (294 aa). An N-linked (GlcNAc...) asparagine glycan is attached at asparagine 67. The next 5 helical transmembrane spans lie at 92-112, 166-186, 190-210, 270-290, and 308-328; these read LWFV…SFGF, LGIM…AFSQ, LTLV…FIVS, FVGL…AIGF, and ILSV…LGPN. Residues 374–618 enclose the ABC transporter 1 domain; it reads VELRDMSFAY…GGLYKRLYDA (245 aa). A glycan (N-linked (GlcNAc...) asparagine) is linked at asparagine 396. ATP is bound at residue 409-416; that stretch reads GPSGAGKS. A glycan (N-linked (GlcNAc...) asparagine) is linked at asparagine 463. The next 6 membrane-spanning stretches (helical) occupy residues 686–706, 734–754, 808–828, 830–850, 913–933, and 950–970; these read YWPI…IFPV, LMFF…GFFM, MGLL…GLAY, WKFA…AGYL, VMTL…ALGF, and FFTV…LFGF. Residues 691-976 form the ABC transmembrane type-1 2 domain; that stretch reads LIGLVACVVT…LFGFSSNLGK (286 aa). 2 N-linked (GlcNAc...) asparagine glycosylation sites follow: asparagine 1007 and asparagine 1021. One can recognise an ABC transporter 2 domain in the interval 1017–1255; that stretch reads VDMQNVTFAY…QGNYFKMHES (239 aa). 1052–1059 serves as a coordination point for ATP; the sequence is GTSGSGKS. N-linked (GlcNAc...) asparagine glycosylation is present at asparagine 1106.

This sequence belongs to the ABC transporter superfamily. ABCB family. Multidrug resistance exporter (TC 3.A.1.201) subfamily.

It is found in the cell membrane. Its function is as follows. ABC-type transmembrane transporter; part of the gene cluster that mediates the biosynthesis of 11'-deoxyverticillin A, one of the dimeric epipolythiodioxopiperazines (ETPs) from the verticillin family that are toxic secondary metabolites. The verA multidrug transporter is probably involved in the secretion of 11'-deoxyverticillin A. The chain is ABC-type transmembrane transporter verA from Clonostachys rogersoniana.